We begin with the raw amino-acid sequence, 357 residues long: Nicotinate-nucleotide--dimethylbenzimidazole phosphoribosyltransferase (357 aa).

Catalysis depends on glutamate 323, which acts as the Proton acceptor.

The protein belongs to the CobT family.

The enzyme catalyses 5,6-dimethylbenzimidazole + nicotinate beta-D-ribonucleotide = alpha-ribazole 5'-phosphate + nicotinate + H(+). It functions in the pathway nucleoside biosynthesis; alpha-ribazole biosynthesis; alpha-ribazole from 5,6-dimethylbenzimidazole: step 1/2. Its function is as follows. Catalyzes the synthesis of alpha-ribazole-5'-phosphate from nicotinate mononucleotide (NAMN) and 5,6-dimethylbenzimidazole (DMB). The chain is Nicotinate-nucleotide--dimethylbenzimidazole phosphoribosyltransferase from Nitratidesulfovibrio vulgaris (strain DP4) (Desulfovibrio vulgaris).